The chain runs to 775 residues: Ribonucleoside-diphosphate reductase large subunit (775 aa).

Residues threonine 200, 215-216 (SC), glycine 246, 427-431 (NLCTE), and 606-610 (PTVSS) contribute to the substrate site. Cysteine 216 and cysteine 444 are joined by a disulfide. Asparagine 427 serves as the catalytic Proton acceptor. The Cysteine radical intermediate role is filled by cysteine 429. Catalysis depends on glutamate 431, which acts as the Proton acceptor.

This sequence belongs to the ribonucleoside diphosphate reductase large chain family. In terms of assembly, heterotetramer composed of a homodimer of the large subunit (R1) and a homodimer of the small subunit (R2). Larger multisubunit protein complex are also active, composed of (R1)n(R2)n.

It catalyses the reaction a 2'-deoxyribonucleoside 5'-diphosphate + [thioredoxin]-disulfide + H2O = a ribonucleoside 5'-diphosphate + [thioredoxin]-dithiol. Ribonucleoside-diphosphate reductase holoenzyme provides the precursors necessary for viral DNA synthesis. Allows virus growth in non-dividing cells, as well as reactivation from latency in infected hosts. Catalyzes the biosynthesis of deoxyribonucleotides from the corresponding ribonucleotides. The polypeptide is Ribonucleoside-diphosphate reductase large subunit (Homo sapiens (Human)).